Reading from the N-terminus, the 331-residue chain is MAEGGGAEPEEQERRSSRPRPPSARDLQLALAELYEDEMKCKSSKPDRSTATAFKSPRTPPLRLYSGDQEYGGLHIAQPPTGKIVNELFKEAREHGAVPLNEATRSSSDDKAKSFTGGGYRLGSSFYKRSEYIYGENQLQDVQILLRLWSNGFSLDDGELRPYSDPTNAQFLESVKRGEIPLELQRLVHGSQVSLDMEDHQDQEYIKPRLRFKAFSGEGQKLGSLTPEIVSTPSSPEEEDKSILNAAVLIDDSVPTTKIQIRLADGSRLIQRFNSTHRILDVRDFIVQSRPEFATTDFILVTSFPSKELTDESVTLQDADILNTVILQQLK.

Disordered stretches follow at residues 1 to 26 and 38 to 63; these read MAEG…SARD and EMKC…PPLR. An N-acetylalanine modification is found at Ala2. A compositionally biased stretch (basic and acidic residues) spans 38–48; sequence EMKCKSSKPDR. A Phosphoserine modification is found at Ser56. Thr59 carries the phosphothreonine modification. A Phosphoserine modification is found at Ser66. Positions 141–206 constitute an SEP domain; the sequence is DVQILLRLWS…MEDHQDQEYI (66 aa). Residues Ser231, Ser234, and Ser235 each carry the phosphoserine modification. Residues 252-329 form the UBX domain; sequence DSVPTTKIQI…DILNTVILQQ (78 aa).

This sequence belongs to the NSFL1C family. As to quaternary structure, interacts with VCP. Does not bind ubiquitin. As to expression, present at high level in brain. Also present in liver, kidney, spleen, testis, lung and heart (at protein level).

It is found in the nucleus. Its subcellular location is the cytoplasm. The protein resides in the cytosol. It localises to the endoplasmic reticulum. The protein localises to the golgi apparatus. It is found in the cytoskeleton. Its subcellular location is the microtubule organizing center. The protein resides in the centrosome. In terms of biological role, adapter protein required for Golgi and endoplasmic reticulum biogenesis. Involved in Golgi and endoplasmic reticulum maintenance during interphase and in their reassembly at the end of mitosis. The complex formed with VCP has membrane fusion activity; membrane fusion activity requires USO1-GOLGA2 tethering and BET1L. VCPIP1 is also required, but not its deubiquitinating activity. Together with NSFL1C/p47, regulates the centrosomal levels of kinase AURKA/Aurora A during mitotic progression by promoting AURKA removal from centrosomes in prophase. Also, regulates spindle orientation during mitosis. In Rattus norvegicus (Rat), this protein is UBX domain-containing protein 2B (Ubxn2b).